The chain runs to 460 residues: Bifunctional protein GlmU (460 aa).

The tract at residues 1–229 (MSKLNIVVLA…VWETTGVNSK (229 aa)) is pyrophosphorylase. UDP-N-acetyl-alpha-D-glucosamine-binding positions include 9–12 (LAAG), lysine 23, glutamine 74, 79–80 (GT), 101–103 (YGD), glycine 138, glutamate 154, asparagine 169, and asparagine 227. A Mg(2+)-binding site is contributed by aspartate 103. Asparagine 227 lines the Mg(2+) pocket. The segment at 230-250 (VQLAGLERIYQTAQANKLLEQ) is linker. The tract at residues 251–460 (GVALADPARI…RPVKKPKPKN (210 aa)) is N-acetyltransferase. Residues arginine 333 and lysine 351 each contribute to the UDP-N-acetyl-alpha-D-glucosamine site. Catalysis depends on histidine 363, which acts as the Proton acceptor. Tyrosine 366 and asparagine 377 together coordinate UDP-N-acetyl-alpha-D-glucosamine. Acetyl-CoA is bound by residues alanine 380, 386–387 (NY), serine 405, alanine 423, and arginine 440.

This sequence in the N-terminal section; belongs to the N-acetylglucosamine-1-phosphate uridyltransferase family. In the C-terminal section; belongs to the transferase hexapeptide repeat family. Homotrimer. Mg(2+) serves as cofactor.

It localises to the cytoplasm. The enzyme catalyses alpha-D-glucosamine 1-phosphate + acetyl-CoA = N-acetyl-alpha-D-glucosamine 1-phosphate + CoA + H(+). It carries out the reaction N-acetyl-alpha-D-glucosamine 1-phosphate + UTP + H(+) = UDP-N-acetyl-alpha-D-glucosamine + diphosphate. Its pathway is nucleotide-sugar biosynthesis; UDP-N-acetyl-alpha-D-glucosamine biosynthesis; N-acetyl-alpha-D-glucosamine 1-phosphate from alpha-D-glucosamine 6-phosphate (route II): step 2/2. It participates in nucleotide-sugar biosynthesis; UDP-N-acetyl-alpha-D-glucosamine biosynthesis; UDP-N-acetyl-alpha-D-glucosamine from N-acetyl-alpha-D-glucosamine 1-phosphate: step 1/1. The protein operates within bacterial outer membrane biogenesis; LPS lipid A biosynthesis. Its function is as follows. Catalyzes the last two sequential reactions in the de novo biosynthetic pathway for UDP-N-acetylglucosamine (UDP-GlcNAc). The C-terminal domain catalyzes the transfer of acetyl group from acetyl coenzyme A to glucosamine-1-phosphate (GlcN-1-P) to produce N-acetylglucosamine-1-phosphate (GlcNAc-1-P), which is converted into UDP-GlcNAc by the transfer of uridine 5-monophosphate (from uridine 5-triphosphate), a reaction catalyzed by the N-terminal domain. This is Bifunctional protein GlmU from Nitrosospira multiformis (strain ATCC 25196 / NCIMB 11849 / C 71).